Here is a 1082-residue protein sequence, read N- to C-terminus: Inner tegument protein (1082 aa).

Positions 604 to 1082 (DHIECLFNVS…QQDLITPLKF (479 aa)) are interaction with large tegument protein.

It belongs to the herpesviridae inner tegument protein family. Interacts (via C-terminus) with the large tegument protein/LTP (via N-terminus).

It localises to the virion tegument. The protein resides in the host cytoplasm. Its subcellular location is the host nucleus. The protein localises to the host Golgi apparatus. It is found in the host trans-Golgi network. Functionally, plays an essential role in cytoplasmic secondary envelopment during viral egress. Interacts with the capsid via the large tegument protein/LTP and participates in its transport to the host trans-Golgi network (TGN) where secondary envelopment occurs. Modulates tegumentation and capsid accumulation at the viral assembly complex. The protein is Inner tegument protein (U30) of Homo sapiens (Human).